A 784-amino-acid polypeptide reads, in one-letter code: MRRSLAPSQRGPLRPESRHSFTPPLLKKNKRSCQQELEREQELDRKRQSALRDASNTLELPLPIRFTANSEYERAIAKVLARKFKVPMDNYVPDYGGKRVLGVRRCISRRPLHDPVACNALVLFHPPAYTEHERMGMDPSKVLVHVVVDPLLSNILRPHQREGVRFMYECVEGKRGNFNGCIMADEMGLGKTLQCVTLVWTLLRQGPECKPTINKAIVVSPSSLVKNWEKEFTKWLQGRLLCLPMEGGTKENTIRALEQFSMTSSRLGTPVLLISYETFRIYAEILCKYEVGMVICDEGHRLKNSDNLTYQALMGLKTKRRVLLSGTPIQNDLTEYYSLVNFVNPEMLGTAAVFKRNFESAILRGQNTDSTDAERQRAIAKTQELIGLVDQCIIRRTNQILTKYLPVKFEMVICAKLTSIQLELYTNFLKSDQVRRSLADCKEKASLTALADITTLKKICSHPNLIYEKITARDKGFENSQNVLPSNYNAKDLNPELSGKFMLLDFMLAAIRADGNDKVVLISNYTQTLDLFEQLARKRKYGFVRLDGTMSIKKRSKVVDRFNDPESDSFLFMLSSKAGGCGLNLIGANRLFMFDPDWNPANDEQAMARVWRDGQKKPCYIYRLVASGSIEEKILQRQTHKKSLSSTIIDNNESAEKHFTRDDLKDLFTFDADILSDTHDKLKCKRCVQNIQMKPPPEDTDCTSHLSQWYHCSNNRGLPDNILAQAWMDCKCVSFVFHHRSQAQEIVASAEEAASEQPEEKPDRRKRPSTPLSDDSADEDFLGF.

A disordered region spans residues 1–50 (MRRSLAPSQRGPLRPESRHSFTPPLLKKNKRSCQQELEREQELDRKRQSA). The required for chromatin remodeling, strand pairing activities and coupling of ATPase activity stretch occupies residues 2 to 9 (RRSLAPSQ). Ser-20 bears the Phosphoserine mark. Residue Thr-22 is modified to Phosphothreonine. The segment covering 36-47 (ELEREQELDRKR) has biased composition (basic and acidic residues). The 175-residue stretch at 172–346 (EGKRGNFNGC…YSLVNFVNPE (175 aa)) folds into the Helicase ATP-binding domain. ATP is bound at residue 185–192 (DEMGLGKT). The DEGH box signature appears at 297-300 (DEGH). Positions 503–660 (LLDFMLAAIR…NNESAEKHFT (158 aa)) constitute a Helicase C-terminal domain. Low complexity predominate over residues 747–756 (VASAEEAASE). A disordered region spans residues 747–784 (VASAEEAASEQPEEKPDRRKRPSTPLSDDSADEDFLGF). The span at 775–784 (DSADEDFLGF) shows a compositional bias: acidic residues.

The protein belongs to the SNF2/RAD54 helicase family. In terms of assembly, interacts (via N-terminus) with spn-A/Rad51.

The protein resides in the nucleus. Its function is as follows. Involved in mitotic DNA repair and meiotic recombination. Functions in the recombinational DNA repair pathway. Essential for interhomolog gene conversion (GC), but may have a less important role in intersister GC than spn-A/Rad51. In the presence of DNA, spn-A/Rad51 enhances the ATPase activity of okr/Rad54. The polypeptide is DNA repair and recombination protein RAD54-like (Drosophila erecta (Fruit fly)).